The following is a 466-amino-acid chain: 3-isopropylmalate dehydratase large subunit (466 aa).

The [4Fe-4S] cluster site is built by Cys-347, Cys-407, and Cys-410.

This sequence belongs to the aconitase/IPM isomerase family. LeuC type 1 subfamily. As to quaternary structure, heterodimer of LeuC and LeuD. Requires [4Fe-4S] cluster as cofactor.

It catalyses the reaction (2R,3S)-3-isopropylmalate = (2S)-2-isopropylmalate. Its pathway is amino-acid biosynthesis; L-leucine biosynthesis; L-leucine from 3-methyl-2-oxobutanoate: step 2/4. Its function is as follows. Catalyzes the isomerization between 2-isopropylmalate and 3-isopropylmalate, via the formation of 2-isopropylmaleate. This chain is 3-isopropylmalate dehydratase large subunit, found in Escherichia coli O45:K1 (strain S88 / ExPEC).